A 578-amino-acid chain; its full sequence is L-ascorbate oxidase (578 aa).

Residues 1 to 28 (MASLGFLFFFLLPLILLELSSSRSVMAA) form the signal peptide. Plastocyanin-like domains follow at residues 30 to 149 (TRHF…LIVE) and 161 to 328 (DGEF…NYLP). Residues His-87, His-89, His-131, and His-133 each contribute to the Cu cation site. 2 cysteine pairs are disulfide-bonded: Cys-108-Cys-565 and Cys-207-Cys-221. Residue Asn-206 is glycosylated (N-linked (GlcNAc...) asparagine). Residues Asn-349, Asn-394, Asn-438, and Asn-451 are each glycosylated (N-linked (GlcNAc...) asparagine). Positions 372-550 (HRRIILLNTQ…HMGMGVIFAE (179 aa)) constitute a Plastocyanin-like 3 domain. 8 residues coordinate Cu cation: His-472, His-475, His-477, His-533, Cys-534, His-535, His-539, and Met-544.

Belongs to the multicopper oxidase family. In terms of assembly, dimer. Cu cation serves as cofactor. As to expression, highly expressed in young and growing tissues.

The protein resides in the secreted. The enzyme catalyses 4 L-ascorbate + O2 = 4 monodehydro-L-ascorbate radical + 2 H2O. May be involved in a redox system involving ascorbic acid. The chain is L-ascorbate oxidase (AAO) from Nicotiana tabacum (Common tobacco).